The chain runs to 320 residues: Cytochrome f (320 aa).

A signal peptide spans 1-35 (MHTKNLFYSRTQQITQYLSALLMMVILTRTSISSA). Y36, C56, C59, and H60 together coordinate heme. The chain crosses the membrane as a helical span at residues 286–306 (VQVLLFFFASIILAQIFLVLK).

The protein belongs to the cytochrome f family. As to quaternary structure, the 4 large subunits of the cytochrome b6-f complex are cytochrome b6, subunit IV (17 kDa polypeptide, petD), cytochrome f and the Rieske protein, while the 4 small subunits are PetG, PetL, PetM and PetN. The complex functions as a dimer. Heme is required as a cofactor.

It is found in the plastid thylakoid membrane. Component of the cytochrome b6-f complex, which mediates electron transfer between photosystem II (PSII) and photosystem I (PSI), cyclic electron flow around PSI, and state transitions. This is Cytochrome f from Cuscuta gronovii (Common dodder).